Reading from the N-terminus, the 233-residue chain is MGVHAEFVLSAVAQGQFPQDGLPEVALVGRSNVGKSSLINALVRNRKLARTSNTPGRTQALNFYRVWPQGKPRPEGEPQPDKDAGRTALSGPVLQAARESGAFYLVDMPGYGFARVSEAQRREWARLIEGYLLTRGALRGVLQIVDLRHPPTRDDVTMREWIRHHRLPSLCVATKADKIGRTAWPRHRQVIARELGLDGDGEPLVLFSAETGLGRDDVWRWIREHVQDWTFDM.

The EngB-type G domain maps to 21 to 228 (GLPEVALVGR…WRWIREHVQD (208 aa)). GTP-binding positions include 29 to 36 (GRSNVGKS) and 56 to 60 (GRTQA). Positions 36 and 58 each coordinate Mg(2+). The interval 68–87 (PQGKPRPEGEPQPDKDAGRT) is disordered. Over residues 72 to 85 (PRPEGEPQPDKDAG) the composition is skewed to basic and acidic residues. GTP-binding positions include 107-110 (DMPG), 174-177 (TKAD), and 207-209 (FSA).

It belongs to the TRAFAC class TrmE-Era-EngA-EngB-Septin-like GTPase superfamily. EngB GTPase family. Mg(2+) serves as cofactor.

Functionally, necessary for normal cell division and for the maintenance of normal septation. This chain is Probable GTP-binding protein EngB, found in Symbiobacterium thermophilum (strain DSM 24528 / JCM 14929 / IAM 14863 / T).